Consider the following 344-residue polypeptide: ATPase GET3 (344 aa).

Residue 26–33 (KGGVGKTT) coordinates ATP. The active site involves Asp57. ATP is bound by residues Glu239 and Asn266. Zn(2+) contacts are provided by Cys276 and Cys279.

It belongs to the arsA ATPase family. Homodimer. Component of the Golgi to ER traffic (GET) complex, which is composed of GET1, GET2 and GET3. Within the complex, GET1 and GET2 form a heterotetramer which is stabilized by phosphatidylinositol binding and which binds to the GET3 homodimer. Interacts with the chloride channel protein GEF1.

It localises to the cytoplasm. The protein localises to the endoplasmic reticulum. The protein resides in the golgi apparatus. Functionally, ATPase required for the post-translational delivery of tail-anchored (TA) proteins to the endoplasmic reticulum. Recognizes and selectively binds the transmembrane domain of TA proteins in the cytosol. This complex then targets to the endoplasmic reticulum by membrane-bound receptors GET1 and GET2, where the tail-anchored protein is released for insertion. This process is regulated by ATP binding and hydrolysis. ATP binding drives the homodimer towards the closed dimer state, facilitating recognition of newly synthesized TA membrane proteins. ATP hydrolysis is required for insertion. Subsequently, the homodimer reverts towards the open dimer state, lowering its affinity for the GET1-GET2 receptor, and returning it to the cytosol to initiate a new round of targeting. Cooperates with the HDEL receptor ERD2 to mediate the ATP-dependent retrieval of resident ER proteins that contain a C-terminal H-D-E-L retention signal from the Golgi to the ER. Involved in low-level resistance to the oxyanions arsenite and arsenate, and in heat tolerance. This is ATPase GET3 from Komagataella phaffii (strain GS115 / ATCC 20864) (Yeast).